The following is a 91-amino-acid chain: Small ribosomal subunit protein bS18 (91 aa).

This sequence belongs to the bacterial ribosomal protein bS18 family. In terms of assembly, part of the 30S ribosomal subunit. Forms a tight heterodimer with protein bS6.

Binds as a heterodimer with protein bS6 to the central domain of the 16S rRNA, where it helps stabilize the platform of the 30S subunit. The chain is Small ribosomal subunit protein bS18 from Burkholderia vietnamiensis (strain G4 / LMG 22486) (Burkholderia cepacia (strain R1808)).